The sequence spans 260 residues: Thiazole synthase (260 aa).

Catalysis depends on K96, which acts as the Schiff-base intermediate with DXP. 1-deoxy-D-xylulose 5-phosphate is bound by residues G157, 184-185 (AG), and 206-207 (NT).

Belongs to the ThiG family. In terms of assembly, homotetramer. Forms heterodimers with either ThiH or ThiS.

It is found in the cytoplasm. The enzyme catalyses [ThiS sulfur-carrier protein]-C-terminal-Gly-aminoethanethioate + 2-iminoacetate + 1-deoxy-D-xylulose 5-phosphate = [ThiS sulfur-carrier protein]-C-terminal Gly-Gly + 2-[(2R,5Z)-2-carboxy-4-methylthiazol-5(2H)-ylidene]ethyl phosphate + 2 H2O + H(+). Its pathway is cofactor biosynthesis; thiamine diphosphate biosynthesis. Functionally, catalyzes the rearrangement of 1-deoxy-D-xylulose 5-phosphate (DXP) to produce the thiazole phosphate moiety of thiamine. Sulfur is provided by the thiocarboxylate moiety of the carrier protein ThiS. In vitro, sulfur can be provided by H(2)S. This Rhodopseudomonas palustris (strain BisB18) protein is Thiazole synthase.